Here is a 956-residue protein sequence, read N- to C-terminus: Run domain Beclin-1-interacting and cysteine-rich domain-containing protein (956 aa).

Residues 49 to 190 (WSKYGGLERL…PRLLAQIDAS (142 aa)) form the RUN domain. Positions 50–181 (SKYGGLERLC…CLEAVEQNNP (132 aa)) are interaction with PIK3C3. Phosphoserine is present on Ser-198. An interaction with YWHAB region spans residues 205–437 (SQSLTALPGS…ITIIVEDPIA (233 aa)). The segment covering 233-242 (SLQSMPQSSH) has biased composition (low complexity). A disordered region spans residues 233–423 (SLQSMPQSSH…TNIASRGAAG (191 aa)). 2 positions are modified to phosphoserine: Ser-250 and Ser-268. The segment covering 270–319 (AETQTTPAPLPSDSTLAQDSPLTAQEMSDSTLTSPLEASWVSSQNDSPSD) has biased composition (polar residues). Residues 302-585 (TSPLEASWVS…DLEIQDADIR (284 aa)) form an interaction with UVRAG region. Over residues 339-371 (ASCESHSSNGESSSSHLFSSSSSQKLESAASSL) the composition is skewed to low complexity. Polar residues predominate over residues 379-395 (QSQAGSVLRRSSFSEGQ). Phosphoserine occurs at positions 390, 412, 513, and 547. The segment at 490-542 (AIELMKCNMMSQCLEEEEVEEEDSDREIQELKQKIRLRRQQIRTKNLLPAYRE) is interaction with BECN1. Low complexity predominate over residues 547–566 (SFRVTSSSSQFSSRDSTQLS). Positions 547–579 (SFRVTSSSSQFSSRDSTQLSESGSAEDADDLEI) are disordered. The interval 552–609 (SSSSQFSSRDSTQLSESGSAEDADDLEIQDADIRRSAVSNGKSSFSQNLSHCFLHSTS) is interaction with CYBA. Positions 570–579 (SAEDADDLEI) are enriched in acidic residues. A Phosphoserine modification is found at Ser-655. Residues 656–744 (PDDGQHADIY…HENAQMVVPS (89 aa)) are interaction with CARD9. Residues 705–956 (CAGCGIRTDP…ALEATVLETT (252 aa)) form an interaction with Rab7 region.

As to quaternary structure, associates with PI3K (PI3KC3/PI3K-III/class III phosphatidylinositol 3-kinase) complex II (PI3KC3-C2) in which the core composed of the catalytic subunit PIK3C3, the regulatory subunit PIK3R4 and BECN1 is associated with UVRAG; in the complex interacts directly with PI3KC3 and UVRAG. Interacts with Rab7 (RAB7A or RAB7B) (GTP-bound form); Rab7 and UVRAG compete for RUBCN binding; can interact simultaneously with Rab7 and the PI3K complex. Interacts with CYBA and CYBB; indicative for the association with the CYBA:CYBB NADPH oxidase heterodimer. Interacts with NOX4 and probably associates with the CYBA:NOX4 complex. Interacts with YWHAB and CARD9 in a competitive and stimulation-dependent manner; RUBCN exchanges interaction from YWHAB to CARD9 upon stimulation with beta-1,3-glucan.

It localises to the late endosome. The protein resides in the lysosome. It is found in the early endosome. Its function is as follows. Inhibits PIK3C3 activity; under basal conditions negatively regulates PI3K complex II (PI3KC3-C2) function in autophagy. Negatively regulates endosome maturation and degradative endocytic trafficking and impairs autophagosome maturation process. Can sequester UVRAG from association with a class C Vps complex (possibly the HOPS complex) and negatively regulates Rab7 activation. In terms of biological role, involved in regulation of pathogen-specific host defense of activated macrophages. Following bacterial infection promotes NADH oxidase activity by association with CYBA thereby affecting TLR2 signaling and probably other TLR-NOX pathways. Stabilizes the CYBA:CYBB NADPH oxidase heterodimer, increases its association with TLR2 and its phagosome trafficking to induce antimicrobial burst of ROS and production of inflammatory cytokines. Following fungal or viral infection (implicating CLEC7A (dectin-1)-mediated myeloid cell activation or RIGI-dependent sensing of RNA viruses) negatively regulates pro-inflammatory cytokine production by association with CARD9 and sequestering it from signaling complexes. The protein is Run domain Beclin-1-interacting and cysteine-rich domain-containing protein of Mus musculus (Mouse).